A 79-amino-acid chain; its full sequence is Conotoxin ArMSGL-0122 (79 aa).

The first 20 residues, 1–20, serve as a signal peptide directing secretion; the sequence is MSRLGIMVLTLLLLVFIVTS. Residues 21-44 constitute a propeptide that is removed on maturation; that stretch reads HQDAGEKQATQRAAINFRWKRSLT. 3 disulfides stabilise this stretch: Cys-52-Cys-64, Cys-56-Cys-73, and Cys-63-Cys-77. At Leu-78 the chain carries Leucine amide.

Belongs to the conotoxin O3 superfamily. Expressed by the venom duct.

It localises to the secreted. In Conus arenatus (Sand-dusted cone), this protein is Conotoxin ArMSGL-0122.